A 243-amino-acid chain; its full sequence is Complement C1q tumor necrosis factor-related protein 5 (243 aa).

Positions 1–15 are cleaved as a signal peptide; sequence MRPLLVLLLLGLAAG. The disordered stretch occupies residues 15–125; it reads GSPPLDDNKI…PPPSDAPLPF (111 aa). Positions 30–95 constitute a Collagen-like domain; sequence GHPGLPGTPG…AGPAGPTGPA (66 aa). Positions 83-96 are enriched in low complexity; sequence RGEAGPAGPTGPAG. Residues 99–238 form the C1q domain; that stretch reads SVPPRSAFSA…GFLVYSDWHS (140 aa).

In terms of assembly, may interact with ERFE. Homotrimer (via collagen-like domain). May form higher order oligomers by supercoiling of the trimers.

Its subcellular location is the secreted. In Homo sapiens (Human), this protein is Complement C1q tumor necrosis factor-related protein 5 (C1QTNF5).